The chain runs to 239 residues: Probable transcriptional regulatory protein Ajs_1898 (239 aa).

The disordered stretch occupies residues 1–21 (MAGHSKWANIQHRKGRQDEKR).

It belongs to the TACO1 family.

The protein resides in the cytoplasm. In Acidovorax sp. (strain JS42), this protein is Probable transcriptional regulatory protein Ajs_1898.